The sequence spans 418 residues: Aminodeoxyfutalosine deaminase (418 aa).

Residues His-97 and His-99 each contribute to the Zn(2+) site. The substrate site is built by Glu-173 and His-211. His-238 serves as a coordination point for Zn(2+). Glu-241 serves as the catalytic Proton donor. Asp-352 contacts Zn(2+).

Belongs to the metallo-dependent hydrolases superfamily. Zn(2+) is required as a cofactor.

The enzyme catalyses 6-amino-6-deoxyfutalosine + H2O + H(+) = futalosine + NH4(+). It participates in quinol/quinone metabolism; menaquinone biosynthesis. Catalyzes the deamination of aminodeoxyfutalosine (AFL) into futalosine (FL). To a lesser extent, can also deaminate 5'-deoxyadenosine, 5'-methylthioadenosine, 2'-deoxyadenosine, adenosine, 1-(6-amino-9H-purin-9-yl)-1-deoxy-N-ethyl-beta-D-ribofuranuronamide (NECA), and S-adenosylhomocysteine. The sequence is that of Aminodeoxyfutalosine deaminase from Deinococcus radiodurans (strain ATCC 13939 / DSM 20539 / JCM 16871 / CCUG 27074 / LMG 4051 / NBRC 15346 / NCIMB 9279 / VKM B-1422 / R1).